Here is a 128-residue protein sequence, read N- to C-terminus: Anti-sigma-F factor antagonist RsfA (128 aa).

Positions 17 to 128 (LKATIQHHDS…PTTESALSAT (112 aa)) constitute an STAS domain. Residues cysteine 73 and cysteine 109 are joined by a disulfide bond.

The protein belongs to the anti-sigma-factor antagonist family. In terms of assembly, monomer. Interacts with anti-sigma-F factor RsbW (UsfX).

Its function is as follows. Positive, redox-sensitive regulator of sigma-F (SigF) activity. When reduced binds to anti-sigma-F factor RsbW (UsfX) preventing its binding to SigF, thus activating transcription. The polypeptide is Anti-sigma-F factor antagonist RsfA (rsfA) (Mycobacterium tuberculosis (strain CDC 1551 / Oshkosh)).